The primary structure comprises 445 residues: Cytochrome P450 monooxygenase penB (445 aa).

Heme is bound at residue C381.

This sequence belongs to the cytochrome P450 family. The cofactor is heme.

It participates in secondary metabolite biosynthesis. Its pathway is alkaloid biosynthesis. The protein operates within mycotoxin biosynthesis. Cytochrome P450 monooxygenase; part of the gene cluster that mediates the biosynthesis of penigequinolones, potent insecticidal alkaloids that contain a highly modified 10-carbon prenyl group. The first stage is catalyzed by the nonribosomal peptide synthetase penN that condenses anthranilic acid and O-methyl-L-tyrosine to produce 4'-methoxycyclopeptin. 4'-methoxycyclopeptin is then converted to 4'-methoxydehydrocyclopeptin by the ketoglutarate-dependent dioxygenase penM through dehydrogenation to form a double bond between C-alpha and C-beta of the O-methyltyrosine side chain. PenM also converts its first product methoxydehydrocyclopeptin to 4'-methoxycyclopenin. The following conversion of 4'methoxycyclopenin into 4'-methoxyviridicatin is catalyzed by the cyclopenase penL. 4'-methoxyviridicatin is the precursor of quinolone natural products, and is further converted to quinolinone B. The prenyltransferase penI then catalyzes the canonical Friedel-Crafts alkylation of quinolinone B with dimethylallyl cation to yield dimethylallyl quinolone, which is subjected to FAD-dependent dehydrogenation by the FAD-linked oxidoreductase penH to yield conjugated aryl diene. The delta(3') double bond then serves as the site of the second alkylation with DMAPP catalyzed by the prenyltransferase penG to yield a carbenium ion intermediate, which can be attacked by H(2)O to yield a styrenyl quinolone containing a C3'-hydroxyprenyl chain, or undergo cyclization to yield yaequinolones J1 and J2. The conversion of the styrenyl quinolone into the tetrahydrofuran-containing yaequinolone C is performed by the FAD-dependent monooxygenase penE and involves epoxidation of the terminal C7'-C8' olefin, followed by epoxide ring opening initiated by the C3' hydroxyl group. The predicted cysteine hydrolase penJ acts as an epoxide hydrolase that enhances the rate of the 5-exo-tet cyclization step, increasing the yield of yaequinolone C. PenF catalyzes the cationic rearrangement of the epoxide formed by penE (before ring opening to produce yaequinolone C) into yaequinolone D. Finally, the short-chain dehydrogenase/reductase (SDR)-like reductase penD, catalyzes both the dehydration of yaequinolone D and the reduction of the resulting oxonium to yield penigequinolone. The sequence is that of Cytochrome P450 monooxygenase penB from Penicillium thymicola.